We begin with the raw amino-acid sequence, 171 residues long: Large ribosomal subunit protein uL10 (171 aa).

It belongs to the universal ribosomal protein uL10 family. As to quaternary structure, part of the ribosomal stalk of the 50S ribosomal subunit. The N-terminus interacts with L11 and the large rRNA to form the base of the stalk. The C-terminus forms an elongated spine to which L12 dimers bind in a sequential fashion forming a multimeric L10(L12)X complex.

Functionally, forms part of the ribosomal stalk, playing a central role in the interaction of the ribosome with GTP-bound translation factors. This chain is Large ribosomal subunit protein uL10, found in Corynebacterium glutamicum (strain ATCC 13032 / DSM 20300 / JCM 1318 / BCRC 11384 / CCUG 27702 / LMG 3730 / NBRC 12168 / NCIMB 10025 / NRRL B-2784 / 534).